A 459-amino-acid polypeptide reads, in one-letter code: MKESRNLENFVEKKLYECKKKYVDIPKDEGQRYGGKHYEALTSKIFEILRKENPELDIIIAEFSLEGSVGMLKIAKPNEFDLVFKLKFPYYKSIAVTRDPKIPGNVLLDMTRVLELLKDDPREDFQRIRELIQGRLVDAQNFFVVDRLRSWLQSLFSQALNRISYRVELVAGVVSHLKYRTCGPAHTIYVYGDYEYSVDYVPAICLAAEQNVLPTKQLECFKRANTSYWEAIPKPLKPLTETSMISFRSSFYAVEKILLQDVHENCRNAIRFMKKFRDVKTNLGNCKSYYIKTLFLWKIIQEPESYWLNPLSFILADMFDDLAENLRRGVITFFWDPELNMIDALTRDQVWEMYLCVQRIPRDLRGAEISRNKWSFFVLREFSHKKERNVNLKCSSRRKRNVIKGLKTTSICKLRNARTNGTWTAGLWTRPGHAYRGPSETVSTWDTVKDAAWSEGIVE.

Residues Ser68 and 79–81 (EFD) each bind ATP. Residues Glu79, Asp81, and Asp199 each coordinate Mg(2+). GTP is bound by residues Asp199 and 248–255 (RSSFYAVE). Residue 252-255 (YAVE) participates in ATP binding. His263 is a binding site for Zn(2+). ATP contacts are provided by residues Lys274 and 288–292 (SYYIK).

This sequence belongs to the mab-21 family. Requires Mg(2+) as cofactor. Mn(2+) serves as cofactor.

The enzyme catalyses GTP + ATP = 3',2'-cGAMP + 2 diphosphate. The catalysed reaction is GTP + ATP = 2',3'-cGAMP + 2 diphosphate. It carries out the reaction GTP + ATP = pppGp(2'-5')A + diphosphate. It catalyses the reaction pppA(2'-5')pG = 3',2'-cGAMP + diphosphate. The enzyme catalyses pppGp(2'-5')A = 2',3'-cGAMP + diphosphate. The enzyme activity is specifically activated by some nucleic acid. Functionally, nucleotidyltransferase that catalyzes the formation of cyclic GMP-AMP from ATP and GTP and plays a key role in antiviral innate immunity. Directly binds some unknown nucleic acid, activating the nucleotidyltransferase activity, leading to synthesis of both 3',2'-cGAMP and 2',3'-cGAMP second messengers. 3',2'-cGAMP and 2',3'-cGAMP bind to and activate Sting, thereby triggering the antiviral immune response via activation of the NF-kappa-B transcription factor Rel (Relish). The polypeptide is Cyclic GMP-AMP synthase-like receptor 2 (Drosophila melanogaster (Fruit fly)).